The chain runs to 344 residues: NADH-ubiquinone oxidoreductase chain 2 (344 aa).

Transmembrane regions (helical) follow at residues 1-21, 24-44, 59-79, 94-114, 121-141, 150-170, 177-197, 201-221, 245-265, 273-293, and 324-344; these read MNPLALTIFLLSLAIGTTITL, FHWLLAWIGLEINTLAIIPLM, YFLTQAAASALVLFSSLISAW, MNILSIALMMKLGLAPLHFWI, ISLPTGLILSTWQKIAPMALL, LNLTIALGLTSIMVGGWGGIG, IMAFSSIGHLGWIIVILKFDP, LLNFVLYIIMTAAMFMSLTTI, LILLSLAGLPPLTGFTPKLLI, NATLLAVMVMFISLLALFFYI, and TAIMNTMALILLPITPTLLLL.

It belongs to the complex I subunit 2 family.

It localises to the mitochondrion inner membrane. The enzyme catalyses a ubiquinone + NADH + 5 H(+)(in) = a ubiquinol + NAD(+) + 4 H(+)(out). Its function is as follows. Core subunit of the mitochondrial membrane respiratory chain NADH dehydrogenase (Complex I) that is believed to belong to the minimal assembly required for catalysis. Complex I functions in the transfer of electrons from NADH to the respiratory chain. The immediate electron acceptor for the enzyme is believed to be ubiquinone. This is NADH-ubiquinone oxidoreductase chain 2 (MT-ND2) from Aquarana catesbeiana (American bullfrog).